The chain runs to 203 residues: MPAWLSALLAALGGYLLGSIPTGYWVGRCWGGIDLRQAGSGSTGATNVLRTVGKGPALLVLLVDAAKGAAAVALGSALGSPWWVVVAALGAVIGHSRSCWLGFKGGKSVATSLGILLAMAWPVALATFGVWLLGIALTRIVSFSSLLAAVAAPLLMWALGQPLPYLLFALAGGVYVIAAHRRNIERLLAGSEPRIGQKWAQSP.

Transmembrane regions (helical) follow at residues 1-21 (MPAW…GSIP), 52-72 (VGKG…AAAV), 73-93 (ALGS…GAVI), 115-135 (ILLA…LLGI), 140-160 (IVSF…WALG), and 161-181 (QPLP…AAHR).

This sequence belongs to the PlsY family. As to quaternary structure, probably interacts with PlsX.

It is found in the cell inner membrane. The enzyme catalyses an acyl phosphate + sn-glycerol 3-phosphate = a 1-acyl-sn-glycero-3-phosphate + phosphate. Its pathway is lipid metabolism; phospholipid metabolism. In terms of biological role, catalyzes the transfer of an acyl group from acyl-phosphate (acyl-PO(4)) to glycerol-3-phosphate (G3P) to form lysophosphatidic acid (LPA). This enzyme utilizes acyl-phosphate as fatty acyl donor, but not acyl-CoA or acyl-ACP. The polypeptide is Glycerol-3-phosphate acyltransferase (Synechococcus sp. (strain JA-3-3Ab) (Cyanobacteria bacterium Yellowstone A-Prime)).